We begin with the raw amino-acid sequence, 443 residues long: Threonine/serine transporter TdcC (443 aa).

Helical transmembrane passes span 22–42 (TTWTLGLFGTAIGAGVLFFPI), 44–64 (AGFGGLIPILLMLVLAYPIAF), 97–117 (GVVITFLYFFAICPLLWIYGV), 140–160 (FVALFLLLLMAFVIWFGKDLM), 163–183 (VMSYLVWPFIASLVLISLSLI), 207–227 (ILVTVWLGISIMVFSFNFSPI), 259–279 (ASMLMVAVVMFFAFSCLFTLS), 319–339 (ASIIALVAIFKSFFGHYLGTL), 366–386 (ISMIFIMGSTWVVAYANPNIL), 389–409 (IEAMGAPIIASLLCLLPMYAI), and 423–443 (DNVFVTLIGLLTILNIVYKLF).

The protein belongs to the amino acid/polyamine transporter 2 family. SdaC/TdcC subfamily.

Its subcellular location is the cell inner membrane. It carries out the reaction L-threonine(in) + H(+)(in) = L-threonine(out) + H(+)(out). It catalyses the reaction L-serine(in) + H(+)(in) = L-serine(out) + H(+)(out). Its function is as follows. Involved in the import of threonine and serine into the cell, with the concomitant import of a proton (symport system). In Salmonella paratyphi A (strain ATCC 9150 / SARB42), this protein is Threonine/serine transporter TdcC.